The sequence spans 101 residues: UPF0473 protein MGAS10750_Spy1887 (101 aa).

The protein belongs to the UPF0473 family.

This chain is UPF0473 protein MGAS10750_Spy1887, found in Streptococcus pyogenes serotype M4 (strain MGAS10750).